We begin with the raw amino-acid sequence, 282 residues long: Probable endonuclease 4 (282 aa).

Zn(2+)-binding residues include H71, H111, E147, D181, H184, H218, D231, H233, and E263.

This sequence belongs to the AP endonuclease 2 family. It depends on Zn(2+) as a cofactor.

It catalyses the reaction Endonucleolytic cleavage to 5'-phosphooligonucleotide end-products.. Endonuclease IV plays a role in DNA repair. It cleaves phosphodiester bonds at apurinic or apyrimidinic (AP) sites, generating a 3'-hydroxyl group and a 5'-terminal sugar phosphate. The protein is Probable endonuclease 4 of Protochlamydia amoebophila (strain UWE25).